A 410-amino-acid polypeptide reads, in one-letter code: NADH-quinone oxidoreductase subunit H (410 aa).

9 helical membrane-spanning segments follow: residues 11-31, 79-99, 119-139, 160-180, 192-212, 257-277, 283-303, 317-337, and 347-367; these read LVAA…LVAI, FVYF…FAFI, LPVA…GIVL, VISY…MAGT, GVWY…SMVG, ALAA…NMWA, WWPL…YFWL, ALGW…AAII, and YWTP…VLLL. The tract at residues 376-410 is disordered; it reads ARASARQRGDEGTSPEPAFPTPPLLAGATKENAGG.

The protein belongs to the complex I subunit 1 family. As to quaternary structure, NDH-1 is composed of 14 different subunits. Subunits NuoA, H, J, K, L, M, N constitute the membrane sector of the complex.

The protein resides in the cell membrane. The enzyme catalyses a quinone + NADH + 5 H(+)(in) = a quinol + NAD(+) + 4 H(+)(out). In terms of biological role, NDH-1 shuttles electrons from NADH, via FMN and iron-sulfur (Fe-S) centers, to quinones in the respiratory chain. The immediate electron acceptor for the enzyme in this species is believed to be menaquinone. Couples the redox reaction to proton translocation (for every two electrons transferred, four hydrogen ions are translocated across the cytoplasmic membrane), and thus conserves the redox energy in a proton gradient. This is NADH-quinone oxidoreductase subunit H from Mycobacterium bovis (strain ATCC BAA-935 / AF2122/97).